Here is a 307-residue protein sequence, read N- to C-terminus: tRNA pseudouridine synthase B (307 aa).

Residue aspartate 38 is the Nucleophile of the active site.

The protein belongs to the pseudouridine synthase TruB family. Type 1 subfamily.

It carries out the reaction uridine(55) in tRNA = pseudouridine(55) in tRNA. Responsible for synthesis of pseudouridine from uracil-55 in the psi GC loop of transfer RNAs. The sequence is that of tRNA pseudouridine synthase B from Bacillus cytotoxicus (strain DSM 22905 / CIP 110041 / 391-98 / NVH 391-98).